Here is a 370-residue protein sequence, read N- to C-terminus: Peptide chain release factor 1 (370 aa).

An N5-methylglutamine modification is found at glutamine 239.

It belongs to the prokaryotic/mitochondrial release factor family. Methylated by PrmC. Methylation increases the termination efficiency of RF1.

It localises to the cytoplasm. Peptide chain release factor 1 directs the termination of translation in response to the peptide chain termination codons UAG and UAA. The chain is Peptide chain release factor 1 from Bacteroides fragilis (strain ATCC 25285 / DSM 2151 / CCUG 4856 / JCM 11019 / LMG 10263 / NCTC 9343 / Onslow / VPI 2553 / EN-2).